The chain runs to 151 residues: Protein NrdI (151 aa).

It belongs to the NrdI family.

Functionally, probably involved in ribonucleotide reductase function. In Mycoplasmopsis pulmonis (strain UAB CTIP) (Mycoplasma pulmonis), this protein is Protein NrdI.